We begin with the raw amino-acid sequence, 353 residues long: UPF0283 membrane protein YcjF (353 aa).

Basic and acidic residues predominate over residues 1 to 19 (MSEPLKPRIDFAEPLKEEP). Residues 1-35 (MSEPLKPRIDFAEPLKEEPTSAFKAQQTFSEAESR) are disordered. 3 helical membrane-spanning segments follow: residues 70-90 (MVMG…VQWT), 100-120 (VALG…GSVV), and 213-233 (ESTL…FIAW).

The protein belongs to the UPF0283 family.

It is found in the cell inner membrane. This Salmonella paratyphi C (strain RKS4594) protein is UPF0283 membrane protein YcjF.